A 563-amino-acid polypeptide reads, in one-letter code: F-box/kelch-repeat protein At5g42350 (563 aa).

The 47-residue stretch at 129 to 175 (YRKHVYLPDDILEMCLMRLPLTSLLNAHLVCKKWQSMANTQRFLQMR) folds into the F-box domain. Kelch repeat units lie at residues 184-231 (WLFL…SIHE), 232-282 (EIYI…ATEV), and 355-402 (VLIA…IICN).

The sequence is that of F-box/kelch-repeat protein At5g42350 from Arabidopsis thaliana (Mouse-ear cress).